Here is an 86-residue protein sequence, read N- to C-terminus: YcgL domain-containing protein Smlt4554 (86 aa).

Residues 1–85 form the YcgL domain; the sequence is MHAYVYKSQL…SVASLMPRHY (85 aa).

The chain is YcgL domain-containing protein Smlt4554 from Stenotrophomonas maltophilia (strain K279a).